A 511-amino-acid polypeptide reads, in one-letter code: Histidine ammonia-lyase (511 aa).

The 5-imidazolinone (Ala-Gly) cross-link spans alanine 144–glycine 146. The residue at position 145 (serine 145) is a 2,3-didehydroalanine (Ser).

Belongs to the PAL/histidase family. In terms of processing, contains an active site 4-methylidene-imidazol-5-one (MIO), which is formed autocatalytically by cyclization and dehydration of residues Ala-Ser-Gly.

The protein localises to the cytoplasm. It carries out the reaction L-histidine = trans-urocanate + NH4(+). It participates in amino-acid degradation; L-histidine degradation into L-glutamate; N-formimidoyl-L-glutamate from L-histidine: step 1/3. This is Histidine ammonia-lyase from Halalkalibacterium halodurans (strain ATCC BAA-125 / DSM 18197 / FERM 7344 / JCM 9153 / C-125) (Bacillus halodurans).